A 1216-amino-acid polypeptide reads, in one-letter code: Probable phospholipid-transporting ATPase 4 (1216 aa).

The Cytoplasmic segment spans residues M1–F74. The chain crosses the membrane as a helical span at residues P75–L96. The Extracellular portion of the chain corresponds to S97 to P100. Residues L101–K123 form a helical membrane-spanning segment. The Cytoplasmic portion of the chain corresponds to E124 to I305. The chain crosses the membrane as a helical span at residues I306–E327. Residues T328–H359 lie on the Extracellular side of the membrane. Residues L360–V377 traverse the membrane as a helical segment. The Cytoplasmic portion of the chain corresponds to S378–A922. The active-site 4-aspartylphosphate intermediate is the D425. K605 is covalently cross-linked (Glycyl lysine isopeptide (Lys-Gly) (interchain with G-Cter in ubiquitin)). Positions 867 and 871 each coordinate Mg(2+). A helical transmembrane segment spans residues Q923–F942. Residues E943 to D956 lie on the Extracellular side of the membrane. A helical transmembrane segment spans residues Y957–V976. The Cytoplasmic segment spans residues F977–R1006. Residues I1007 to I1029 form a helical membrane-spanning segment. At Y1030–D1042 the chain is on the extracellular side. The chain crosses the membrane as a helical span at residues M1043–T1065. Over V1066–W1071 the chain is Cytoplasmic. The helical transmembrane segment at I1072–G1092 threads the bilayer. Over M1093–I1109 the chain is Extracellular. Residues L1110–H1134 traverse the membrane as a helical segment. Residues I1135–V1216 are Cytoplasmic-facing. The tract at residues L1195–V1216 is disordered. The span at K1198–V1216 shows a compositional bias: polar residues.

This sequence belongs to the cation transport ATPase (P-type) (TC 3.A.3) family. Type IV subfamily.

The protein localises to the membrane. It catalyses the reaction ATP + H2O + phospholipidSide 1 = ADP + phosphate + phospholipidSide 2.. Functionally, involved in transport of phospholipids. This chain is Probable phospholipid-transporting ATPase 4, found in Arabidopsis thaliana (Mouse-ear cress).